The following is a 1102-amino-acid chain: MPVMKGLLAPQNTFLDTIATRFDGTHSNFILANAQVAKGFPIVYCSDGFCELAGFARTEVMQKSCSCKFLFGVETNEQLMLQIEKSLEEKVEFKGEIMFYKKNGAPFWCLLDIVPIKNEKGDVVLFLASFKDITDTKVKITSEDKKEDRAKGRSRAGSHFDSARRRSRAVLYHISGHLQRREKNKLKINNNVFVDKPAFPEYKVSDAKKSKFILLHFSTFKAGWDWLILLATFYVAVTVPYNVCFIGNEDLSTTRSTTVSDIAVEILFIIDIILNFRTTYVSKSGQVIFEARSICIHYVTTWFIIDLIAALPFDLLYAFNVTVVSLVHLLKTVRLLRLLRLLQKLDRYSQHSTIVLTLLMSMFALLAHWMACIWYVIGKMEREDNSLLKWEVGWLHELGKRLESPYYGNNTLGGPSIRSAYIAALYFTLSSLTSVGFGNVSANTDAEKIFSICTMLIGALMHALVFGNVTAIIQRMYSRWSLYHTRTKDLKDFIRVHHLPQQLKQRMLEYFQTTWSVNNGIDSNELLKDFPDELRSDITMHLNKEILQLSLFECASRGCLRSLSLHIKTSFCAPGEYLLRQGDALQAIYFVCSGSMEVLKDSMVLAILGKGDLIGANLSIKDQVIKTNADVKALTYCDLQCIILKGLFEVLGLYPEYAHKFVEDIQHDLTYNLREGHESDVISRLSNKSTVPQAEPKGNGSIKKRLPSIVEDEEEEEVEEEETTSLSPIYTRGSSVSHSKKTGSSKSYLGLSLKQLTSGTVPFHSPIRVSSANSPKTKQEADPPNHGTRKEKNLKVQLCSLGTAGTPELSPRIVDGIEDGNSSEETQTFDFGSEQIRPEPRISPSLGESEIGAAFLFIKAEETKQQINKLNSEVTTLTQEVSQLGKDMRSIMQLLENILSPQQPSQFCSLHPTSICPSRESFQTRVSWSAHQPCLHLQANGAHLYHGNVTSDIWSVDPSLVGSNPQRTEAHEQSPVDSELHHSPNLAYSPSHCQVIQEGHLQFLRCISPHSDTTLTPLQSISATLSSSVCSSSETSLHLVLPSRSEEGSITHGPVSSFSLENLPGSWDREGMMSASTEPLENFPVEVVTSTADVKDSKAINV.

The Cytoplasmic portion of the chain corresponds to 1–225 (MPVMKGLLAP…HFSTFKAGWD (225 aa)). Residues 18-90 (IATRFDGTHS…LQIEKSLEEK (73 aa)) form the PAS domain. The PAC domain occupies 93-145 (FKGEIMFYKKNGAPFWCLLDIVPIKNEKGDVVLFLASFKDITDTKVKITSEDK). Residues 226-246 (WLILLATFYVAVTVPYNVCFI) form a helical membrane-spanning segment. At 247 to 255 (GNEDLSTTR) the chain is on the extracellular side. The helical transmembrane segment at 256–276 (STTVSDIAVEILFIIDIILNF) threads the bilayer. Residues 277–298 (RTTYVSKSGQVIFEARSICIHY) are Cytoplasmic-facing. A helical membrane pass occupies residues 299–319 (VTTWFIIDLIAALPFDLLYAF). Asn-320 carries N-linked (GlcNAc...) asparagine glycosylation. At 320–327 (NVTVVSLV) the chain is on the extracellular side. The chain crosses the membrane as a helical; Voltage-sensor span at residues 328–348 (HLLKTVRLLRLLRLLQKLDRY). Residues 349 to 353 (SQHST) are Cytoplasmic-facing. A helical transmembrane segment spans residues 354–374 (IVLTLLMSMFALLAHWMACIW). At 375–419 (YVIGKMEREDNSLLKWEVGWLHELGKRLESPYYGNNTLGGPSIRS) the chain is on the extracellular side. A glycan (N-linked (GlcNAc...) asparagine) is linked at Asn-409. An intramembrane region (pore-forming) is located at residues 420–440 (AYIAALYFTLSSLTSVGFGNV). Residues 434–439 (SVGFGN) carry the Selectivity filter motif. Topologically, residues 441 to 448 (SANTDAEK) are extracellular. The helical transmembrane segment at 449 to 469 (IFSICTMLIGALMHALVFGNV) threads the bilayer. The Cytoplasmic portion of the chain corresponds to 470 to 1102 (TAIIQRMYSR…DVKDSKAINV (633 aa)). Residues 551–668 (LFECASRGCL…HKFVEDIQHD (118 aa)) form a cNMP-binding domain region. 4 disordered regions span residues 683 to 744 (SRLS…KTGS), 762 to 793 (PFHS…KEKN), 818 to 845 (EDGN…ISPS), and 960 to 983 (LVGS…LHHS). The segment covering 710–723 (VEDEEEEEVEEEET) has biased composition (acidic residues). The segment covering 777 to 793 (TKQEADPPNHGTRKEKN) has biased composition (basic and acidic residues). Residues 968 to 982 (TEAHEQSPVDSELHH) show a composition bias toward basic and acidic residues.

It belongs to the potassium channel family. H (Eag) (TC 1.A.1.20) subfamily. Kv12.1/KCNH8 sub-subfamily. In terms of assembly, the potassium channel is probably composed of a homo- or heterotetrameric complex of pore-forming alpha subunits that can associate with modulating beta subunits. Detected in superior cervical, mesenteric and coeliac ganglia. Expressed in brain (piriform cortex, olfactory tubercle, cerebral cortex, hippocampus pyramidial cells and dentate gyrus and basal ganglia of caudate/putamen and accumbens nucleus). Expressed in pituitary.

Its subcellular location is the membrane. The catalysed reaction is K(+)(in) = K(+)(out). Functionally, pore-forming (alpha) subunit of a voltage-gated delayed rectifier potassium channel that mediates outward-rectifying potassium currents. Elicits a slowly activating, non-inactivating and slowly deactivation outwards potassium current at depolarizating voltages from -30 mV to +50mV. Shows no obvious change in the activation rate from different holding potentials. Activation is strongly dependent on the pH of the external solution. This is Voltage-gated delayed rectifier potassium channel KCNH8 from Rattus norvegicus (Rat).